Reading from the N-terminus, the 735-residue chain is Peroxisomal multifunctional enzyme type 2 (735 aa).

The tract at residues 1–305 (MASPLRFDGR…IEVLHKIDSE (305 aa)) is (3R)-hydroxyacyl-CoA dehydrogenase. NAD(+) is bound by residues 16 to 40 (GAGG…VVND), Leu-21, and Asp-40. Lys-46 carries the N6-acetyllysine; alternate modification. Position 46 is an N6-succinyllysine; alternate (Lys-46). Ser-52 carries the post-translational modification Phosphoserine. N6-succinyllysine is present on residues Lys-57 and Lys-68. 75–76 (SV) serves as a coordination point for NAD(+). Position 84 is an N6-succinyllysine (Lys-84). Position 99 (Asn-99) interacts with NAD(+). Ser-151 is a binding site for substrate. Tyr-164 acts as the Proton acceptor in catalysis. NAD(+)-binding positions include 164-168 (YSAAK) and 196-199 (AGSR). The residue at position 265 (Thr-265) is a Phosphothreonine. At Lys-275 the chain carries N6-succinyllysine. A phosphoserine mark is found at Ser-304 and Ser-308. Residues 321 to 621 (SGFAGVVGHK…AQTPSEGGAL (301 aa)) form an enoyl-CoA hydratase 2 region. The residue at position 355 (Lys-355) is an N6-succinyllysine. Residue 405–406 (HG) coordinates (3R)-3-hydroxydecanoyl-CoA. Residue Lys-423 is modified to N6-succinyllysine. Residues Lys-434, 509 to 514 (DSNPLH), Gly-532, and Phe-562 each bind (3R)-3-hydroxydecanoyl-CoA. In terms of domain architecture, MaoC-like spans 483 to 599 (VPSRPPDAVL…QETGDIVISN (117 aa)). Lys-564 carries the N6-acetyllysine modification. An N6-succinyllysine mark is found at Lys-578 and Lys-662. The region spanning 623 to 735 (SALVFGEIGR…QMILKDYAKL (113 aa)) is the SCP2 domain. At Lys-668 the chain carries N6-acetyllysine. 2 residues coordinate substrate: Gln-705 and Gln-723. The residue at position 724 (Lys-724) is an N6-succinyllysine. The Microbody targeting signal signature appears at 733–735 (AKL).

It belongs to the short-chain dehydrogenases/reductases (SDR) family. As to quaternary structure, homodimer.

The protein resides in the peroxisome. It carries out the reaction a (3R)-3-hydroxyacyl-CoA + NAD(+) = a 3-oxoacyl-CoA + NADH + H(+). The catalysed reaction is (24R,25R)-3alpha,7alpha,12alpha,24-tetrahydroxy-5beta-cholestan-26-oyl-CoA = (24E)-3alpha,7alpha,12alpha-trihydroxy-5beta-cholest-24-en-26-oyl-CoA + H2O. The enzyme catalyses a (3R)-3-hydroxyacyl-CoA = a (2E)-enoyl-CoA + H2O. It catalyses the reaction (2E)-octenoyl-CoA + H2O = (3R)-hydroxyoctanoyl-CoA. It carries out the reaction (3R)-hydroxyoctanoyl-CoA + NAD(+) = 3-oxooctanoyl-CoA + NADH + H(+). The catalysed reaction is (3R)-hydroxyhexadecanoyl-CoA + NAD(+) = 3-oxohexadecanoyl-CoA + NADH + H(+). The enzyme catalyses (2E)-hexadecenedioyl-CoA + H2O = (3R)-hydroxyhexadecanedioyl-CoA. It catalyses the reaction (3R)-hydroxyhexadecanedioyl-CoA + NAD(+) = 3-oxohexadecanedioyl-CoA + NADH + H(+). It carries out the reaction (3R)-hydroxyhexadecanoyl-CoA = (2E)-hexadecenoyl-CoA + H2O. The catalysed reaction is (3R)-3-hydroxydecanoyl-CoA = (2E)-decenoyl-CoA + H2O. The enzyme catalyses (3R)-3-hydroxydecanoyl-CoA + NAD(+) = 3-oxodecanoyl-CoA + NADH + H(+). It catalyses the reaction (24R,25R)-3alpha,7alpha,12alpha,24-tetrahydroxy-5beta-cholestan-26-oyl-CoA + NAD(+) = 3alpha,7alpha,12alpha-trihydroxy-24-oxo-5beta-cholestan-26-oyl-CoA + NADH + H(+). The protein operates within lipid metabolism; fatty acid beta-oxidation. Its function is as follows. Bifunctional enzyme acting on the peroxisomal fatty acid beta-oxidation pathway. Catalyzes two of the four reactions in fatty acid degradation: hydration of 2-enoyl-CoA (trans-2-enoyl-CoA) to produce (3R)-3-hydroxyacyl-CoA, and dehydrogenation of (3R)-3-hydroxyacyl-CoA to produce 3-ketoacyl-CoA (3-oxoacyl-CoA), which is further metabolized by SCPx. Can use straight-chain and branched-chain fatty acids, as well as bile acid intermediates as substrates. The polypeptide is Peroxisomal multifunctional enzyme type 2 (Rattus norvegicus (Rat)).